The following is a 103-amino-acid chain: Large ribosomal subunit protein bL21 (103 aa).

Belongs to the bacterial ribosomal protein bL21 family. As to quaternary structure, part of the 50S ribosomal subunit. Contacts protein L20.

In terms of biological role, this protein binds to 23S rRNA in the presence of protein L20. The chain is Large ribosomal subunit protein bL21 from Mycolicibacterium smegmatis (strain ATCC 700084 / mc(2)155) (Mycobacterium smegmatis).